Here is a 196-residue protein sequence, read N- to C-terminus: MIPVVIEQTSRGERSYDIYSRLLKDRIIMLTGPVEDNMANSVIAQLLFLDAQDSTKDIYLYVNTPGGSVSAGLAIVDTMNFIKADVQTIVMGMAASMGTVIASSGAKGKRFMLPNAEYMIHQPMGGTGGGTQQTDMAIAAEHLLKTRNTLEKILAENSGQSMEKVHADAERDNWMSAQETLEYGFIDEIMANNSLN.

Ser96 acts as the Nucleophile in catalysis. His121 is an active-site residue.

Belongs to the peptidase S14 family. In terms of assembly, fourteen ClpP subunits assemble into 2 heptameric rings which stack back to back to give a disk-like structure with a central cavity, resembling the structure of eukaryotic proteasomes.

The protein localises to the cytoplasm. The catalysed reaction is Hydrolysis of proteins to small peptides in the presence of ATP and magnesium. alpha-casein is the usual test substrate. In the absence of ATP, only oligopeptides shorter than five residues are hydrolyzed (such as succinyl-Leu-Tyr-|-NHMec, and Leu-Tyr-Leu-|-Tyr-Trp, in which cleavage of the -Tyr-|-Leu- and -Tyr-|-Trp bonds also occurs).. Its function is as follows. Cleaves peptides in various proteins in a process that requires ATP hydrolysis. Has a chymotrypsin-like activity. Plays a major role in the degradation of misfolded proteins. This is ATP-dependent Clp protease proteolytic subunit from Streptococcus pneumoniae (strain ATCC 700669 / Spain 23F-1).